The chain runs to 343 residues: 5-amino-6-(D-ribitylamino)uracil--L-tyrosine 4-hydroxyphenyl transferase (343 aa).

In terms of domain architecture, Radical SAM core spans 39–268; that stretch reads VTYVVNRNIN…AIARILLYPE (230 aa). Positions 53, 57, and 60 each coordinate [4Fe-4S] cluster.

Belongs to the radical SAM superfamily. CofH family. Consists of two subunits, CofG and CofH. [4Fe-4S] cluster serves as cofactor.

The enzyme catalyses 5-amino-6-(D-ribitylamino)uracil + L-tyrosine + S-adenosyl-L-methionine = 5-amino-5-(4-hydroxybenzyl)-6-(D-ribitylimino)-5,6-dihydrouracil + 2-iminoacetate + 5'-deoxyadenosine + L-methionine + H(+). It participates in cofactor biosynthesis; coenzyme F0 biosynthesis. Catalyzes the radical-mediated synthesis of 5-amino-5-(4-hydroxybenzyl)-6-(D-ribitylimino)-5,6-dihydrouracil from 5-amino-6-(D-ribitylamino)uracil and L-tyrosine. This chain is 5-amino-6-(D-ribitylamino)uracil--L-tyrosine 4-hydroxyphenyl transferase, found in Archaeoglobus fulgidus (strain ATCC 49558 / DSM 4304 / JCM 9628 / NBRC 100126 / VC-16).